The chain runs to 465 residues: ATP-sulfurylase 3, chloroplastic (465 aa).

The N-terminal 49 residues, 1 to 49 (MASMSTVFPKPTSFISQPLTKSHKSDSVTTSISFPSNSKTRSLRTISVR), are a transit peptide targeting the chloroplast.

It belongs to the sulfate adenylyltransferase family. In terms of assembly, homotetramer.

The protein localises to the plastid. It localises to the chloroplast stroma. It catalyses the reaction sulfate + ATP + H(+) = adenosine 5'-phosphosulfate + diphosphate. Its pathway is sulfur metabolism; hydrogen sulfide biosynthesis; sulfite from sulfate: step 1/3. The protein is ATP-sulfurylase 3, chloroplastic (APS3) of Arabidopsis thaliana (Mouse-ear cress).